The primary structure comprises 541 residues: FAD-linked oxidoreductase pynB (541 aa).

A signal peptide spans 1-20 (MRLSARGFVWSALLACTASA). N-linked (GlcNAc...) asparagine glycans are attached at residues asparagine 30, asparagine 57, asparagine 117, asparagine 131, asparagine 158, asparagine 253, asparagine 306, asparagine 343, asparagine 430, and asparagine 461. An FAD-binding PCMH-type domain is found at 71–242 (FNEFPALIAY…VDFDLQLMQF (172 aa)).

The protein belongs to the oxygen-dependent FAD-linked oxidoreductase family. It depends on FAD as a cofactor.

It functions in the pathway secondary metabolite biosynthesis. Its function is as follows. FAD-linked oxidoreductase; part of the gene cluster that mediates the biosynthesis of pyranonigrins, a family of antioxidative compounds. The first step of pyranonigrins biosynthesis is performed by the hybrid PKS-NRPS synthetase that condenses 6 malonyl-CoA units to an acetyl starter unit, to form a 1,3,5-trioxotetradecane-6,8-dienyl-ACP. The enoyl reductase (ER) domain of pynA is likely to be functional during the first two rounds of polyketide chain extension, to generate the saturated C-C bonds of the alkyl side chain. PynA subsequently forms the amide bond between the acyl chain and L-serine. Although pynA has a terminal reductase domain, it appears to require the thioesterase pynI for the release of the straight-chain intermediate from pynA via the formation of a tetramic acid pyranonigrin J. The methyltransferase pynC then coverts pyranonigrin J to pyranonigrin I via N-methylation. The FAD-dependent monooxygenase pynG catalyzes an epoxidation-mediated cyclization to form the dihydro-gamma-pyrone moiety, followed by pynD-catalyzed oxidation of the alcohol to the ketone and enolization to yield the characteristic tetramic acid-fused gamma-pyrone core of pyranonigrin H. Pyranonigrin H is substrate of pynH for dehydration-mediated exo-methylene formation from the serine side chain to produce pyranonigrin E, before the oxidase pynE reduces the exo-methylene of pyranonigrin E into a pendant methyl to form pyranonigrin G. The FAD-linked oxidoreductase pynB performs the reverse reaction and converts pyranonigrin G back to pyranonigrin E. In Aspergillus niger (strain ATCC MYA-4892 / CBS 513.88 / FGSC A1513), this protein is FAD-linked oxidoreductase pynB.